A 399-amino-acid chain; its full sequence is Immunoglobulin heavy constant gamma 1 (399 aa).

The segment at 1-21 (ASTKGPSVFPLAPSSKSTSGG) is disordered. The tract at residues 1–98 (ASTKGPSVFP…PSNTKVDKKV (98 aa)) is CH1. Residues 1–350 (ASTKGPSVFP…DGELDGLWTT (350 aa)) lie on the Extracellular side of the membrane. Ig-like domains follow at residues 6-99 (PSVF…KKVE), 121-220 (PSVF…KTIS), and 229-325 (PQVY…KSLS). Cysteine 27 and cysteine 83 are joined by a disulfide. A hinge region spans residues 99–110 (EPKSCDKTHTCP). The interval 111–223 (PCPAPELLGG…PIEKTISKAK (113 aa)) is CH2. Intrachain disulfides connect cysteine 144–cysteine 204 and cysteine 250–cysteine 308. Asparagine 180 is a glycosylation site (N-linked (GlcNAc...) (complex) asparagine). The interval 224-330 (GQPREPQVYT…QKSLSLSPEL (107 aa)) is CH3. Residues 351 to 371 (ITIFITLFLLSVCYSATVTFF) traverse the membrane as a helical segment. Over 372–399 (KVKWIFSSVVDLKQTIIPDYRNMIGQGA) the chain is Cytoplasmic.

In terms of assembly, immunoglobulins are composed of two identical heavy chains and two identical light chains; disulfide-linked. Interacts with FCGR1A; this interaction mediates IgG effector functions on monocytes. Interacts with FCGR2A and FCGR3A. In terms of processing, glycosylation on Asn-180 is required for interaction with Fc receptors and ability to activate the complement pathway. Post-translationally, (Microbial infection) Deglycosylation on Asn-180 by S.pyogenes EndoS or Endos2 endoglucosidases prevents interaction between immunoglobulin-gamma (IgG) and Fc receptors, impairing ability to activate the complement pathway.

The protein localises to the secreted. Its subcellular location is the cell membrane. Its function is as follows. Constant region of immunoglobulin heavy chains. Immunoglobulins, also known as antibodies, are membrane-bound or secreted glycoproteins produced by B lymphocytes. In the recognition phase of humoral immunity, the membrane-bound immunoglobulins serve as receptors which, upon binding of a specific antigen, trigger the clonal expansion and differentiation of B lymphocytes into immunoglobulins-secreting plasma cells. Secreted immunoglobulins mediate the effector phase of humoral immunity, which results in the elimination of bound antigens. The antigen binding site is formed by the variable domain of one heavy chain, together with that of its associated light chain. Thus, each immunoglobulin has two antigen binding sites with remarkable affinity for a particular antigen. The variable domains are assembled by a process called V-(D)-J rearrangement and can then be subjected to somatic hypermutations which, after exposure to antigen and selection, allow affinity maturation for a particular antigen. Mediates IgG effector functions on monocytes triggering ADCC of virus-infected cells. The sequence is that of Immunoglobulin heavy constant gamma 1 from Homo sapiens (Human).